The primary structure comprises 350 residues: Heat-inducible transcription repressor HrcA (350 aa).

This sequence belongs to the HrcA family.

Functionally, negative regulator of class I heat shock genes (grpE-dnaK-dnaJ and groELS operons). Prevents heat-shock induction of these operons. In Methylococcus capsulatus (strain ATCC 33009 / NCIMB 11132 / Bath), this protein is Heat-inducible transcription repressor HrcA.